We begin with the raw amino-acid sequence, 231 residues long: Ribonuclease 3 (231 aa).

The 128-residue stretch at 8–135 (VGDLERRIGH…LMAALYQDGG (128 aa)) folds into the RNase III domain. Glu-48 is a Mg(2+) binding site. Active-site residues include Asp-52 and Glu-124. Glu-124 is a binding site for Mg(2+). The region spanning 161–230 (DPKTALQEWA…AKALLEREGA (70 aa)) is the DRBM domain. Residues 210–231 (GKSRQEAEKAAAKALLEREGAG) are disordered. A compositionally biased stretch (basic and acidic residues) spans 212–231 (SRQEAEKAAAKALLEREGAG).

The protein belongs to the ribonuclease III family. As to quaternary structure, homodimer. Mg(2+) serves as cofactor.

The protein localises to the cytoplasm. The catalysed reaction is Endonucleolytic cleavage to 5'-phosphomonoester.. In terms of biological role, digests double-stranded RNA. Involved in the processing of primary rRNA transcript to yield the immediate precursors to the large and small rRNAs (23S and 16S). Processes some mRNAs, and tRNAs when they are encoded in the rRNA operon. Processes pre-crRNA and tracrRNA of type II CRISPR loci if present in the organism. In Caulobacter vibrioides (strain ATCC 19089 / CIP 103742 / CB 15) (Caulobacter crescentus), this protein is Ribonuclease 3.